A 37-amino-acid chain; its full sequence is Large ribosomal subunit protein bL36 (37 aa).

The protein belongs to the bacterial ribosomal protein bL36 family.

This Chromobacterium violaceum (strain ATCC 12472 / DSM 30191 / JCM 1249 / CCUG 213 / NBRC 12614 / NCIMB 9131 / NCTC 9757 / MK) protein is Large ribosomal subunit protein bL36.